The chain runs to 186 residues: FMN reductase (NADPH) (186 aa).

The protein belongs to the SsuE family.

It carries out the reaction FMNH2 + NADP(+) = FMN + NADPH + 2 H(+). This is FMN reductase (NADPH) (msuE) from Pseudomonas aeruginosa (strain ATCC 15692 / DSM 22644 / CIP 104116 / JCM 14847 / LMG 12228 / 1C / PRS 101 / PAO1).